The following is a 311-amino-acid chain: tRNA dimethylallyltransferase (311 aa).

Position 13 to 20 (13 to 20) interacts with ATP; the sequence is GPTASGKT. 15–20 contacts substrate; sequence TASGKT. Interaction with substrate tRNA stretches follow at residues 38–41 and 166–170; these read DSMQ and QRGLR.

It belongs to the IPP transferase family. As to quaternary structure, monomer. Requires Mg(2+) as cofactor.

It catalyses the reaction adenosine(37) in tRNA + dimethylallyl diphosphate = N(6)-dimethylallyladenosine(37) in tRNA + diphosphate. Functionally, catalyzes the transfer of a dimethylallyl group onto the adenine at position 37 in tRNAs that read codons beginning with uridine, leading to the formation of N6-(dimethylallyl)adenosine (i(6)A). This is tRNA dimethylallyltransferase from Staphylococcus aureus (strain MSSA476).